The sequence spans 257 residues: uncharacterized protein (257 aa).

2 disordered regions span residues 1 to 164 and 225 to 257; these read MERS…AGAC and TAWSGACGAGPTAATAAQPGKPRSAAAPGRARA. The segment covering 10–28 has biased composition (basic and acidic residues); it reads CGEEPRSGSRRLPKAEGDK. Residues 54–65 show a composition bias toward basic residues; that stretch reads RPNRASGRRRRS. Positions 125–139 are enriched in pro residues; sequence RPTPRPCAGPAPPPA. Residues 144-162 are compositionally biased toward basic residues; the sequence is RCRRPRRWPRAGRRGRRAG.

This is an uncharacterized protein from Homo sapiens (Human).